The primary structure comprises 161 residues: MRTGLGYDLHRLVRGKKLMMGGVHIPFKKGEKAHSDGDVLLHAITDALLGACGMGDIGEFFPPSDKKWKDANSSELLSTVWERISEAGWKIQNIDCVIIIEEPKILPFREEIRKSIAGILKIEKEQIFIKAKTGEGIGIIGRGKAVAALASCLIFCRHTQE.

Positions 8 and 10 each coordinate a divalent metal cation. Residues 8–10 (DLH) and 34–35 (HS) each bind 4-CDP-2-C-methyl-D-erythritol 2-phosphate. Position 42 (His42) interacts with a divalent metal cation. 4-CDP-2-C-methyl-D-erythritol 2-phosphate-binding positions include 56–58 (DIG) and Arg142.

It belongs to the IspF family. As to quaternary structure, homotrimer. Requires a divalent metal cation as cofactor.

It catalyses the reaction 4-CDP-2-C-methyl-D-erythritol 2-phosphate = 2-C-methyl-D-erythritol 2,4-cyclic diphosphate + CMP. It participates in isoprenoid biosynthesis; isopentenyl diphosphate biosynthesis via DXP pathway; isopentenyl diphosphate from 1-deoxy-D-xylulose 5-phosphate: step 4/6. Functionally, involved in the biosynthesis of isopentenyl diphosphate (IPP) and dimethylallyl diphosphate (DMAPP), two major building blocks of isoprenoid compounds. Catalyzes the conversion of 4-diphosphocytidyl-2-C-methyl-D-erythritol 2-phosphate (CDP-ME2P) to 2-C-methyl-D-erythritol 2,4-cyclodiphosphate (ME-CPP) with a corresponding release of cytidine 5-monophosphate (CMP). In Treponema denticola (strain ATCC 35405 / DSM 14222 / CIP 103919 / JCM 8153 / KCTC 15104), this protein is 2-C-methyl-D-erythritol 2,4-cyclodiphosphate synthase.